Reading from the N-terminus, the 128-residue chain is Insulin-like growth factor 2 (128 aa).

Positions M1–A24 are cleaved as a signal peptide. Residues A25–F52 are b. Disulfide bonds link C33/C71, C45/C84, and C70/C75. The segment at S53–R64 is c. The tract at residues G65–A85 is a. The segment at T86–E91 is d. The propeptide at R92 to R128 is e peptide.

This sequence belongs to the insulin family. As to quaternary structure, interacts with MYORG; this interaction is required for IGF2 secretion. Interacts with integrins ITGAV:ITGB3 and ITGA6:ITGB4; integrin-binding is required for IGF2 signaling. Proteolytically processed by PCSK4, proIGF2 is cleaved at Arg-128 and Arg-92 to generate big-IGF2 and mature IGF2.

Its subcellular location is the secreted. Its function is as follows. The insulin-like growth factors possess growth-promoting activity. Major fetal growth hormone in mammals. Plays a key role in regulating fetoplacental development. IGF2 is influenced by placental lactogen. Also involved in tissue differentiation. In adults, involved in glucose metabolism in adipose tissue, skeletal muscle and liver. Acts as a ligand for integrin which is required for IGF2 signaling. Positively regulates myogenic transcription factor MYOD1 function by facilitating the recruitment of transcriptional coactivators, thereby controlling muscle terminal differentiation. Inhibits myoblast differentiation and metabolism via increasing the mitochondrial respiration rate. Preptin undergoes glucose-mediated co-secretion with insulin, and acts as a physiological amplifier of glucose-mediated insulin secretion. Exhibits osteogenic properties by increasing osteoblast mitogenic activity through phosphoactivation of MAPK1 and MAPK3. The polypeptide is Insulin-like growth factor 2 (Cavia porcellus (Guinea pig)).